Reading from the N-terminus, the 88-residue chain is Electron transfer flavoprotein regulatory factor 1 (88 aa).

It belongs to the complex I LYR family. Homotetramer. Interacts with NDUFAB1. Interacts with ETFA. Interacts with ETFB.

The protein resides in the mitochondrion. In terms of biological role, acts as a regulator of the electron transfer flavoprotein by promoting the removal of flavin from the ETF holoenzyme (composed of ETFA and ETFB). The protein is Electron transfer flavoprotein regulatory factor 1 of Bos taurus (Bovine).